Consider the following 430-residue polypeptide: MATAVRAVGCLPVLCSGTAGHLLGRQCSLNTLPAASILAWKSVLGNGHLSSLGTRDTHPYASLSRALQTQCCISSPSHLMSQQYRPYSFFTKLTADELWKGALAETGAGAKKGRGKRTKKKKRKDLNRGQIIGEGRYGFLWPGLNVPLMKNGAVQTIAQRSKEEQEKVEADMIQQREEWDRKKKMKVKRERGWSGNSWGGISLGPPDPGPCGETYEDFDTRILEVRNVFTMTAKEGRKKSIRVLVAVGNGKGAAGFSIGKATDRMDAFRKAKNRAVHHLHYIERYEDHTIFHDISLRFKRTHIKMKKQPKGYGLRCHRAIITICRLIGIKDMYAKVSGSINMLSLTQGLFRGLSRQETHQQLADKKGLHVVEIREECGPLPIVVASPRGPLRKDPEPEDEVPDVKLDWEDVKTAQGMKRSVWSNLKRAAT.

Residues 218 to 282 (FDTRILEVRN…NRAVHHLHYI (65 aa)) form the S5 DRBM domain.

This sequence belongs to the universal ribosomal protein uS5 family. Component of the mitochondrial small ribosomal subunit (mt-SSU). Mature mammalian 55S mitochondrial ribosomes consist of a small (28S) and a large (39S) subunit. The 28S small subunit contains a 12S ribosomal RNA (12S mt-rRNA) and 30 different proteins. The 39S large subunit contains a 16S rRNA (16S mt-rRNA), a copy of mitochondrial valine transfer RNA (mt-tRNA(Val)), which plays an integral structural role, and 52 different proteins.

The protein localises to the mitochondrion. The polypeptide is Small ribosomal subunit protein uS5m (MRPS5) (Homo sapiens (Human)).